The sequence spans 105 residues: Protamine-2 (105 aa).

The segment at 1–74 (MVRYRMRSPS…RRSCRRRRRH (74 aa)) is disordered. 2 positions are modified to phosphoserine: Ser8 and Ser10. The span at 33–42 (NPERVEDYGR) shows a compositional bias: basic and acidic residues. Basic residues predominate over residues 43–74 (THRGHHRHRRCSRKRLHRIHKRRRSCRRRRRH).

The protein belongs to the protamine P2 family. Interacts with TDRP. Proteolytic processing into mature chains is required for histone eviction during spermatogenesis. Transition proteins (TNP1 and TNP2) are required for processing. In terms of tissue distribution, testis.

It localises to the nucleus. The protein resides in the chromosome. Functionally, protamines substitute for histones in the chromatin of sperm during the haploid phase of spermatogenesis. They compact sperm DNA into a highly condensed, stable and inactive complex. This Rattus tunneyi (Tunney's rat) protein is Protamine-2 (Prm2).